The sequence spans 442 residues: UDP-N-acetylmuramate--L-alanine ligase (442 aa).

Residue 109–115 (GAHGKTS) participates in ATP binding.

Belongs to the MurCDEF family.

The protein resides in the cytoplasm. It carries out the reaction UDP-N-acetyl-alpha-D-muramate + L-alanine + ATP = UDP-N-acetyl-alpha-D-muramoyl-L-alanine + ADP + phosphate + H(+). It functions in the pathway cell wall biogenesis; peptidoglycan biosynthesis. Cell wall formation. In Streptococcus pyogenes serotype M49 (strain NZ131), this protein is UDP-N-acetylmuramate--L-alanine ligase.